The following is a 194-amino-acid chain: Holliday junction branch migration complex subunit RuvA (194 aa).

The domain I stretch occupies residues 1-64; sequence MIGRLRGVLT…DDSAALYGFL (64 aa). A domain II region spans residues 65-140; the sequence is SESERRLFRH…RAADFNNGIS (76 aa). A flexible linker region spans residues 140 to 144; it reads STSGK. The tract at residues 145 to 194 is domain III; the sequence is LNLDTVSEAALALQQLGYKPAEAARMARDAGTESDDVASVIKKALQAALR.

This sequence belongs to the RuvA family. Homotetramer. Forms an RuvA(8)-RuvB(12)-Holliday junction (HJ) complex. HJ DNA is sandwiched between 2 RuvA tetramers; dsDNA enters through RuvA and exits via RuvB. An RuvB hexamer assembles on each DNA strand where it exits the tetramer. Each RuvB hexamer is contacted by two RuvA subunits (via domain III) on 2 adjacent RuvB subunits; this complex drives branch migration. In the full resolvosome a probable DNA-RuvA(4)-RuvB(12)-RuvC(2) complex forms which resolves the HJ.

The protein localises to the cytoplasm. Functionally, the RuvA-RuvB-RuvC complex processes Holliday junction (HJ) DNA during genetic recombination and DNA repair, while the RuvA-RuvB complex plays an important role in the rescue of blocked DNA replication forks via replication fork reversal (RFR). RuvA specifically binds to HJ cruciform DNA, conferring on it an open structure. The RuvB hexamer acts as an ATP-dependent pump, pulling dsDNA into and through the RuvAB complex. HJ branch migration allows RuvC to scan DNA until it finds its consensus sequence, where it cleaves and resolves the cruciform DNA. The protein is Holliday junction branch migration complex subunit RuvA of Xylella fastidiosa (strain 9a5c).